The primary structure comprises 255 residues: Taurine import ATP-binding protein TauB (255 aa).

The ABC transporter domain occupies 2–229 (LNVSGLWAEY…RYAEGEPCRA (228 aa)). 34-41 (GPSGCGKT) is an ATP binding site.

Belongs to the ABC transporter superfamily. Taurine importer (TC 3.A.1.17.1) family. The complex is composed of two ATP-binding proteins (TauB), two transmembrane proteins (TauC) and a solute-binding protein (TauA).

It localises to the cell inner membrane. It carries out the reaction taurine(out) + ATP + H2O = taurine(in) + ADP + phosphate + H(+). Its function is as follows. Part of the ABC transporter complex TauABC involved in taurine import. Responsible for energy coupling to the transport system. The sequence is that of Taurine import ATP-binding protein TauB from Yersinia pestis bv. Antiqua (strain Antiqua).